The sequence spans 217 residues: Growth hormone variant (217 aa).

The N-terminal stretch at 1–26 (MAAGSRTSLLLAFGLLCLPWLQEGSA) is a signal peptide. Intrachain disulfides connect Cys-79-Cys-191 and Cys-208-Cys-215. At Ser-132 the chain carries Phosphoserine. Asn-166 carries an N-linked (GlcNAc...) asparagine glycan. Position 176 is a phosphoserine (Ser-176).

It belongs to the somatotropin/prolactin family. In terms of tissue distribution, expressed in the placenta.

Its subcellular location is the secreted. Its function is as follows. Plays an important role in growth control. Its major role in stimulating body growth is to stimulate the liver and other tissues to secrete IGF1. It stimulates both the differentiation and proliferation of myoblasts. It also stimulates amino acid uptake and protein synthesis in muscle and other tissues. This is Growth hormone variant (GH2) from Pan troglodytes (Chimpanzee).